Here is a 652-residue protein sequence, read N- to C-terminus: MFKRPLTLSLLASLIALTTSTAQAATVDLRVLETTDLHSNMMDFDYYKDKPTEKFGLVRTASLIEAARQQATNSVLVDNGDLIQGSPLGDYMAAKGLKAGEIHPVYKAMNTLDYAVGNIGNHEFNYGLDYLKKSLAGAKFPYVNANVIDVKTGKPLFQPYLIVDTPVKDRDGKNHNLRIGYIGFGPPQVMIWDKANLTGKVTVDDITETAKKWVPEMRKQGANLVVAIPHSGLSSDPYKTMAENSVYYLSQVPGIDAIMFGHAHAVFPSKDFATIKGADIAQGTLNGIPAVMPGQWGDHLGVVDFVLNNDQGQWQVTQAKAEARPIFDKATQKSLAAENANLMKVLAADHQGTRDFVSQPIGTASDNMYSYLSLIQDDPTVQIVNNAQRAYTEHFIQGDPDLADLPVLSAAAPFKAGGRKNDPASFVEVEKGELTFRNAADLYLYPNTLVVVKASGADVKQWLECSAAQFNQIDVNSSKPQSLINWDSFRTYNFDVIDGVNYEIDVSQPARYDGECALINDKAERIKNLTFNGKPIDPQATFLIGTNNYRAYSGKFAGTGDSHIAFASPDENRAVLSAYISAETKKHGQVTPQADNNWRLATLNSQQPLDIRFETSPSTKAAEFIKQKAQYPMKAMGTDEIGFAVFKIDLQK.

The N-terminal stretch at 1–24 (MFKRPLTLSLLASLIALTTSTAQA) is a signal peptide. Residues aspartate 36, histidine 38, aspartate 81, asparagine 121, histidine 230, histidine 262, and histidine 264 each contribute to the a divalent metal cation site. Substrate is bound by residues tyrosine 445 and 549–555 (YRAYSGK).

Belongs to the 5'-nucleotidase family. A divalent metal cation serves as cofactor.

The protein localises to the periplasm. The enzyme catalyses a nucleoside 2',3'-cyclic phosphate + H2O = a nucleoside 3'-phosphate + H(+). It carries out the reaction a ribonucleoside 3'-phosphate + H2O = a ribonucleoside + phosphate. This bifunctional enzyme catalyzes two consecutive reactions during ribonucleic acid degradation. Converts a 2',3'-cyclic nucleotide to a 3'-nucleotide and then the 3'-nucleotide to the corresponding nucleoside and phosphate. The protein is 2',3'-cyclic-nucleotide 2'-phosphodiesterase/3'-nucleotidase (cpdB) of Yersinia enterocolitica.